A 1147-amino-acid chain; its full sequence is Probable phospholipid-transporting ATPase IIB (1147 aa).

Topologically, residues 1–146 are cytoplasmic; sequence MADQIPLYPV…NQKYNVFTFI (146 aa). The helical transmembrane segment at 147-168 threads the bilayer; the sequence is PGVLYEQFKFFLNLYFLVISCS. Topologically, residues 169-173 are extracellular; it reads QFVPA. The chain crosses the membrane as a helical span at residues 174–196; it reads LKIGYLYTYWAPLGFVLAVTMTR. At 197 to 380 the chain is on the cytoplasmic side; sequence EAIDEFRRFQ…GLLDLELNRL (184 aa). A helical membrane pass occupies residues 381–401; the sequence is TKALFLALVALSIVMVTLQGF. Topologically, residues 402–409 are extracellular; the sequence is VGPWYRNL. A helical transmembrane segment spans residues 410–431; it reads FRFLLLFSYIIPISLRVNLDMG. The Cytoplasmic portion of the chain corresponds to 432–930; sequence KAVYGWMMMK…GRNSYKRSAA (499 aa). Residue Asp-468 is the 4-aspartylphosphate intermediate of the active site. Positions 468, 469, and 470 each coordinate ATP. Asp-468 provides a ligand contact to Mg(2+). Residue Thr-470 participates in Mg(2+) binding. Residues 503-535 form a disordered region; sequence RDSYSQMQSQAGGNNTGSTPLRKAQSSAPKVRK. Residues 505 to 530 are compositionally biased toward polar residues; that stretch reads SYSQMQSQAGGNNTGSTPLRKAQSSA. Residues Glu-591, Phe-633, Lys-638, Lys-657, Arg-686, Thr-687, Thr-766, Gly-767, Asp-768, Arg-848, and Lys-854 each contribute to the ATP site. Residue Asp-874 coordinates Mg(2+). ATP-binding residues include Asn-877 and Asp-878. Residue Asp-878 coordinates Mg(2+). Residues 931–951 traverse the membrane as a helical segment; the sequence is LGQFVMHRGLIISTMQAVFSS. The Extracellular portion of the chain corresponds to 952-963; that stretch reads VFYFASVPLYQG. A helical transmembrane segment spans residues 964-982; it reads FLMVGYATIYTMFPVFSLV. Residues 983–1012 are Cytoplasmic-facing; it reads LDQDVKPEMAMLYPELYKDLTKGRSLSFKT. Residues 1013–1031 form a helical membrane-spanning segment; the sequence is FLIWVLISIYQGGILMYGA. The Extracellular segment spans residues 1032-1038; sequence LVLFESE. A helical membrane pass occupies residues 1039-1061; it reads FVHVVAISFTALILTELLMVALT. The Cytoplasmic segment spans residues 1062-1067; that stretch reads VRTWHW. Residues 1068-1088 form a helical membrane-spanning segment; sequence LMVVAEFLSLGCYVSSLAFLN. The Extracellular portion of the chain corresponds to 1089-1105; it reads EYFGIGRVSFGAFLDVA. Residues 1106–1130 form a helical membrane-spanning segment; the sequence is FITTVTFLWKVSAITVVSCLPLYVL. Residues 1131 to 1147 lie on the Cytoplasmic side of the membrane; that stretch reads KYLRRKLSPPSYCKLAS.

The protein belongs to the cation transport ATPase (P-type) (TC 3.A.3) family. Type IV subfamily. Mg(2+) serves as cofactor.

Its subcellular location is the golgi apparatus. It localises to the trans-Golgi network membrane. The catalysed reaction is ATP + H2O + phospholipidSide 1 = ADP + phosphate + phospholipidSide 2.. The sequence is that of Probable phospholipid-transporting ATPase IIB (ATP9B) from Homo sapiens (Human).